Reading from the N-terminus, the 157-residue chain is Transcriptional repressor NrdR (157 aa).

Positions 1 to 11 (MQCPSCQNTDS) are enriched in polar residues. The disordered stretch occupies residues 1-21 (MQCPSCQNTDSRVLESRSADT). A zinc finger spans residues 3 to 34 (CPSCQNTDSRVLESRSADTGKSVRRRRECLNC). The ATP-cone domain occupies 49 to 139 (ITVIKRSESK…VYRQFNGIND (91 aa)).

The protein belongs to the NrdR family. Zn(2+) is required as a cofactor.

In terms of biological role, negatively regulates transcription of bacterial ribonucleotide reductase nrd genes and operons by binding to NrdR-boxes. The polypeptide is Transcriptional repressor NrdR (Prochlorococcus marinus (strain MIT 9211)).